The sequence spans 81 residues: Small ribosomal subunit protein bS16c (81 aa).

This sequence belongs to the bacterial ribosomal protein bS16 family.

It is found in the plastid. Its subcellular location is the chloroplast. In Emiliania huxleyi (Coccolithophore), this protein is Small ribosomal subunit protein bS16c.